Consider the following 382-residue polypeptide: cAMP-dependent protein kinase type I-alpha regulatory subunit (382 aa).

Position 2 is an N-acetylalanine (Ala2). The interval 2–136 is dimerization and phosphorylation; sequence ATSSSSSSEE…AALAKAIEKN (135 aa). Residues 62 to 96 are disordered; that stretch reads TKQLLNQQKSGSRSDSREDEISPPPPMNPVVKGRR. The Pseudophosphorylation motif signature appears at 97–101; that stretch reads RRGAI. 3',5'-cyclic AMP contacts are provided by residues 138-255, Glu203, Arg212, 256-382, Glu327, and Arg336; these read LFAH…SKVS and ILES…SLSV.

It belongs to the cAMP-dependent kinase regulatory chain family. As to quaternary structure, the inactive form of the enzyme is composed of two regulatory chains and two catalytic chains. Activation by cAMP produces two active catalytic monomers and a regulatory dimer that binds four cAMP molecules. Post-translationally, the pseudophosphorylation site binds to the substrate-binding region of the catalytic chain but is not phosphorylated. The physiological significance of phosphorylations by other kinases is unclear.

It localises to the cell membrane. The protein is cAMP-dependent protein kinase type I-alpha regulatory subunit (PRKAR1A) of Gallus gallus (Chicken).